Reading from the N-terminus, the 433-residue chain is Glutamate-1-semialdehyde 2,1-aminomutase (433 aa).

Lys-273 carries the post-translational modification N6-(pyridoxal phosphate)lysine.

Belongs to the class-III pyridoxal-phosphate-dependent aminotransferase family. HemL subfamily. Homodimer. Pyridoxal 5'-phosphate is required as a cofactor.

It localises to the cytoplasm. The enzyme catalyses (S)-4-amino-5-oxopentanoate = 5-aminolevulinate. It functions in the pathway porphyrin-containing compound metabolism; protoporphyrin-IX biosynthesis; 5-aminolevulinate from L-glutamyl-tRNA(Glu): step 2/2. The protein operates within porphyrin-containing compound metabolism; chlorophyll biosynthesis. The polypeptide is Glutamate-1-semialdehyde 2,1-aminomutase (Rippkaea orientalis (strain PCC 8801 / RF-1) (Cyanothece sp. (strain PCC 8801))).